A 584-amino-acid polypeptide reads, in one-letter code: Potassium-transporting ATPase potassium-binding subunit (584 aa).

The next 10 helical transmembrane spans lie at 8–28, 65–85, 139–159, 172–192, 262–282, 292–312, 398–418, 440–460, 507–527, and 544–564; these read FLVL…EFMF, SFAV…FILQ, VQNF…IYGF, VLLL…ALVL, FTDL…CFMF, GIAI…LGIW, GLYC…LMVG, ILIP…ITAG, MFVG…AFVA, and LFII…FLPA.

The protein belongs to the KdpA family. As to quaternary structure, the system is composed of three essential subunits: KdpA, KdpB and KdpC.

It localises to the cell membrane. Part of the high-affinity ATP-driven potassium transport (or Kdp) system, which catalyzes the hydrolysis of ATP coupled with the electrogenic transport of potassium into the cytoplasm. This subunit binds the extracellular potassium ions and delivers the ions to the membrane domain of KdpB through an intramembrane tunnel. This chain is Potassium-transporting ATPase potassium-binding subunit, found in Methanoregula boonei (strain DSM 21154 / JCM 14090 / 6A8).